The sequence spans 301 residues: GTPase Era (301 aa).

The Era-type G domain maps to 6–173 (KSGFVAIVGR…LEQTNANLEI (168 aa)). Positions 14-21 (GRPNVGKS) are G1. 14-21 (GRPNVGKS) is a binding site for GTP. The G2 stretch occupies residues 40–44 (QTTRN). Residues 61–64 (DTPG) are G3. Residues 61–65 (DTPGI) and 123–126 (NKID) each bind GTP. The G4 stretch occupies residues 123-126 (NKID). Positions 152-154 (ISA) are G5. Residues 204–282 (TREEVPHSVA…FLEIWVKVQK (79 aa)) form the KH type-2 domain.

It belongs to the TRAFAC class TrmE-Era-EngA-EngB-Septin-like GTPase superfamily. Era GTPase family. As to quaternary structure, monomer.

It localises to the cytoplasm. Its subcellular location is the cell membrane. Its function is as follows. An essential GTPase that binds both GDP and GTP, with rapid nucleotide exchange. Plays a role in 16S rRNA processing and 30S ribosomal subunit biogenesis and possibly also in cell cycle regulation and energy metabolism. This chain is GTPase Era, found in Listeria monocytogenes serotype 4b (strain F2365).